The chain runs to 337 residues: Dehydrogenase FUB6 (337 aa).

Belongs to the zinc-containing alcohol dehydrogenase family. Quinone oxidoreductase subfamily.

Its pathway is mycotoxin biosynthesis. In terms of biological role, dehydrogenase; part of the gene cluster that mediates the biosynthesis of fusaric acid, a mycotoxin with low to moderate toxicity to animals and humans, but with high phytotoxic properties. L-aspartate is suggested as fusaric acid amino acid precursor that is activated and further processed to O-acetyl-L-homoserine by cluster enzymes aspartate kinase FUB3 and homoserine O-acetyltransferase FUB5, as well as enzymes of the primary metabolism. The polyketide synthase (PKS) FUB1 generates the triketide trans-2-hexenal which is presumptively released by the hydrolase FUB4 and linked to the NRPS-bound amino acid precursor by NAD(P)-dependent dehydrogenase FUB6. FUB1, FUB4, and the non-canonical NRPS Fub8 may form an enzyme complex. Further processing of the NRPS-bound intermediate might be carried out by FUB6 and the O-acetylhomoserine FUB7, enabling a spontaneous electrocyclization to close the carbon backbone of fusaric acid. Dihydrofusaric acid is likely to be released via reduction by the thioester reductase (TR) domain of FUB8 whereupon the final oxidation to fusaric acid may (also) be performed by the FMN-dependent dehydrogenase FUB9. The polypeptide is Dehydrogenase FUB6 (Gibberella fujikuroi (strain CBS 195.34 / IMI 58289 / NRRL A-6831) (Bakanae and foot rot disease fungus)).